A 273-amino-acid chain; its full sequence is Dermonecrotic toxin LsaSicTox-alphaIB1bii (273 aa).

Residue histidine 5 is part of the active site. Mg(2+)-binding residues include glutamate 25 and aspartate 27. Histidine 41 acts as the Nucleophile in catalysis. Intrachain disulfides connect cysteine 45/cysteine 51 and cysteine 47/cysteine 190. Aspartate 85 lines the Mg(2+) pocket.

Belongs to the arthropod phospholipase D family. Class II subfamily. Mg(2+) is required as a cofactor. In terms of tissue distribution, expressed by the venom gland.

The protein resides in the secreted. It catalyses the reaction an N-(acyl)-sphingosylphosphocholine = an N-(acyl)-sphingosyl-1,3-cyclic phosphate + choline. The enzyme catalyses an N-(acyl)-sphingosylphosphoethanolamine = an N-(acyl)-sphingosyl-1,3-cyclic phosphate + ethanolamine. The catalysed reaction is a 1-acyl-sn-glycero-3-phosphocholine = a 1-acyl-sn-glycero-2,3-cyclic phosphate + choline. It carries out the reaction a 1-acyl-sn-glycero-3-phosphoethanolamine = a 1-acyl-sn-glycero-2,3-cyclic phosphate + ethanolamine. Its function is as follows. Dermonecrotic toxins cleave the phosphodiester linkage between the phosphate and headgroup of certain phospholipids (sphingolipid and lysolipid substrates), forming an alcohol (often choline) and a cyclic phosphate. This toxin acts on sphingomyelin (SM). It may also act on ceramide phosphoethanolamine (CPE), lysophosphatidylcholine (LPC) and lysophosphatidylethanolamine (LPE), but not on lysophosphatidylserine (LPS), and lysophosphatidylglycerol (LPG). It acts by transphosphatidylation, releasing exclusively cyclic phosphate products as second products. Induces dermonecrosis, hemolysis, increased vascular permeability, edema, inflammatory response, and platelet aggregation. In Loxosceles sabina (Tucson recluse spider), this protein is Dermonecrotic toxin LsaSicTox-alphaIB1bii.